A 91-amino-acid polypeptide reads, in one-letter code: Acyl-CoA-binding domain-containing protein 2 (91 aa).

Positions 3–88 (LQEEFEEFAE…VKQLLEEASA (86 aa)) constitute an ACB domain. An acyl-CoA is bound by residues Lys-15, 30 to 34 (YGLYK), Lys-52, Lys-56, and Tyr-75.

This sequence belongs to the ACBP family. In terms of tissue distribution, highly expressed in leaves. Expressed at low levels in roots and seeds.

Its subcellular location is the cytoplasm. It is found in the cytosol. In terms of biological role, binds medium- and long-chain acyl-CoA esters with high affinity. Can interact in vitro with linolenoyl-CoA. Binds palmitoyl-CoA and linoleoyl-CoA in vitro. Binds phosphatidic acid (PA) and phosphatidylcholine (PC) in vitro. May play a role in the biosynthesis of phospholipids. The sequence is that of Acyl-CoA-binding domain-containing protein 2 from Oryza sativa subsp. japonica (Rice).